The chain runs to 508 residues: Fc receptor-like protein 2 (508 aa).

The signal sequence occupies residues 1-19 (MLLWSLLVIFDAVTEQADS). Ig-like C2-type domains lie at 20 to 98 (LTLV…SNIV), 109 to 187 (PVLT…HRIR), 201 to 290 (PISN…KVVN), and 300 to 387 (PVLT…VSIS). Residues 20–401 (LTLVAPSSVF…YRRDLMTAGV (382 aa)) are Extracellular-facing. Cys128 and Cys177 are joined by a disulfide. Asn204, Asn234, Asn343, Asn355, and Asn365 each carry an N-linked (GlcNAc...) asparagine glycan. Disulfide bonds link Cys226-Cys275 and Cys321-Cys368. Residues 402-422 (LWGLFGVLGFTGVALLLYALF) form a helical membrane-spanning segment. The Cytoplasmic portion of the chain corresponds to 423 to 508 (HKISGESSAT…QVIYSSVKKS (86 aa)). A disordered region spans residues 429–453 (SSATNEPRGASRPNPQEFTYSSPTP). Residues 441–452 (PNPQEFTYSSPT) are compositionally biased toward polar residues. Short sequence motifs (ITIM motif) lie at residues 446 to 451 (FTYSSP), 460 to 465 (PVYVNV), 472 to 477 (VVYSQV), and 500 to 505 (VIYSSV).

The tyrosine-phosphorylated isoform 2 interacts with PTPN6. Post-translationally, isoform 2 is N- and O-glycosylated, and phosphorylated. As to expression, expressed in the secondary lymphoid organs, spleen and lymph node. Expression is limited to the mature B-cell lines. Highly expressed in CD19 and within the mantle zones of the tonsil tissue. Isoform 2 is expressed in the spleen, peripheral blood and bone marrow. Isoform 2 and isoform 4 are expressed in B-cell lines. Preferentially expressed in memory B-cells (at protein level).

The protein resides in the cell membrane. Functionally, may have an regulatory role in normal and neoplastic B cell development. The polypeptide is Fc receptor-like protein 2 (FCRL2) (Homo sapiens (Human)).